A 431-amino-acid polypeptide reads, in one-letter code: Mitochondrial inner membrane protein OXA1-like (431 aa).

A mitochondrion-targeting transit peptide spans 1–22 (MATCLRGITKRVNLLQRRVYPS). The next 5 membrane-spanning stretches (helical) occupy residues 119-139 (VVPA…PVAA), 155-175 (WWAS…PILL), 227-247 (FTPL…FFAI), 269-289 (TTTD…LIMV), and 312-332 (IIAF…FCYW). The segment at 362–414 (NSSTRQPSPSSPLPFSFAEPKDQSVVAQEKPPMSSESSSSVPDRRISRSSVLN) is disordered. A compositionally biased stretch (low complexity) spans 392–402 (PPMSSESSSSV).

It belongs to the OXA1/ALB3/YidC (TC 2.A.9.2) family.

Its subcellular location is the mitochondrion inner membrane. Its function is as follows. Probably required for the insertion of integral membrane proteins into the mitochondrial inner membrane. May participate in the activity and assembly of cytochrome oxidase. This chain is Mitochondrial inner membrane protein OXA1-like (OXA1L), found in Arabidopsis thaliana (Mouse-ear cress).